Here is a 403-residue protein sequence, read N- to C-terminus: MSKFNRMHLIVLDSVGIGAAPDANNFVNAGVPDGASDTLGHISKTVGLNVPNMAKLGLGNIPREQPLKTVPAESNPTGYATKLEEVSLGKDTMTGHWEIMGLNITEPFDTFWNGFPEEILTQIEEFSGRKVIREANKPYSGTAVIDDFGPRQMETGELIIYTSADPVLQIAAHEDIIPVEELYRICEFARSITLERPALLGRIIARPYVGEPENFTRTSNRRDLAISPFAPTVLDKLNEAGIDTYSVGKISDIFNGEGINHDMGHNKSNNHGVDNLIKAMTSEDFKHGFSFTNLVDFDALYGHRRNPQGYRDCLHEFDERLPEIIAAMKEDDLLMITADHGNDPTYAGTDHTREYIPFLAYSPSFKCSGLIPVGHFADISATIADNFGVEKAMIGESFLDKLV.

Mn(2+) is bound by residues Asp-13, Asp-298, His-303, Asp-339, His-340, and His-351.

This sequence belongs to the phosphopentomutase family. Requires Mn(2+) as cofactor.

The protein localises to the cytoplasm. The catalysed reaction is 2-deoxy-alpha-D-ribose 1-phosphate = 2-deoxy-D-ribose 5-phosphate. It carries out the reaction alpha-D-ribose 1-phosphate = D-ribose 5-phosphate. Its pathway is carbohydrate degradation; 2-deoxy-D-ribose 1-phosphate degradation; D-glyceraldehyde 3-phosphate and acetaldehyde from 2-deoxy-alpha-D-ribose 1-phosphate: step 1/2. Its function is as follows. Isomerase that catalyzes the conversion of deoxy-ribose 1-phosphate (dRib-1-P) and ribose 1-phosphate (Rib-1-P) to deoxy-ribose 5-phosphate (dRib-5-P) and ribose 5-phosphate (Rib-5-P), respectively. The sequence is that of Phosphopentomutase from Streptococcus thermophilus (strain CNRZ 1066).